The primary structure comprises 711 residues: Glycine--tRNA ligase beta subunit (711 aa).

Belongs to the class-II aminoacyl-tRNA synthetase family. As to quaternary structure, tetramer of two alpha and two beta subunits.

It is found in the cytoplasm. The enzyme catalyses tRNA(Gly) + glycine + ATP = glycyl-tRNA(Gly) + AMP + diphosphate. The sequence is that of Glycine--tRNA ligase beta subunit from Polaromonas naphthalenivorans (strain CJ2).